The primary structure comprises 243 residues: Large ribosomal subunit protein uL3 (243 aa).

Disordered stretches follow at residues 139 to 164 and 218 to 243; these read VSHRSIGSTGGRQDPGKTFKNKKMPG and KPGKFRLADGGGEQTAAAPAAEQEGV. Gln151 carries the post-translational modification N5-methylglutamine. The span at 231-243 shows a compositional bias: low complexity; sequence QTAAAPAAEQEGV.

The protein belongs to the universal ribosomal protein uL3 family. In terms of assembly, part of the 50S ribosomal subunit. Forms a cluster with proteins L14 and L19. Post-translationally, methylated by PrmB.

One of the primary rRNA binding proteins, it binds directly near the 3'-end of the 23S rRNA, where it nucleates assembly of the 50S subunit. The sequence is that of Large ribosomal subunit protein uL3 from Rhodopseudomonas palustris (strain BisB18).